Here is a 523-residue protein sequence, read N- to C-terminus: Peptide chain release factor 3 (523 aa).

The 268-residue stretch at K10–E277 folds into the tr-type G domain. GTP is bound by residues S19–T26, D87–H91, and N141–D144.

This sequence belongs to the TRAFAC class translation factor GTPase superfamily. Classic translation factor GTPase family. PrfC subfamily.

Its subcellular location is the cytoplasm. Functionally, increases the formation of ribosomal termination complexes and stimulates activities of RF-1 and RF-2. It binds guanine nucleotides and has strong preference for UGA stop codons. It may interact directly with the ribosome. The stimulation of RF-1 and RF-2 is significantly reduced by GTP and GDP, but not by GMP. The chain is Peptide chain release factor 3 from Lactobacillus helveticus (strain DPC 4571).